The primary structure comprises 158 residues: Transcriptional repressor NrdR (158 aa).

The tract at residues 1–20 is disordered; the sequence is MRCPSCGSLDTQVKDSRPTE. A zinc finger lies at 3 to 34; it reads CPSCGSLDTQVKDSRPTEDSSVIRRRRVCLTC. The ATP-cone domain maps to 49–139; sequence LTVIKRNGRR…VYRNFREAKD (91 aa).

This sequence belongs to the NrdR family. It depends on Zn(2+) as a cofactor.

Functionally, negatively regulates transcription of bacterial ribonucleotide reductase nrd genes and operons by binding to NrdR-boxes. The chain is Transcriptional repressor NrdR from Afipia carboxidovorans (strain ATCC 49405 / DSM 1227 / KCTC 32145 / OM5) (Oligotropha carboxidovorans).